Reading from the N-terminus, the 331-residue chain is MIHLSILDQAPVSKGESPVTTLQHSVELAQLSEQWGYKRYWFAEHHSTKGLASTAPEIMIARIAAQTNTIRVGSGGVLLPQYSPFKVAETFRQLEALYPNRIDLGVGRSPGGTTKTRLALTDGVKKSLTEFNRQLQDVSYFLTDSLPPDHPYAGIKAAPLIGTAPELWVLGLGENSARRAAHQGIGYVFGHFINPERGENAFRIYRESFRPSAHFSNPSALFTIFVICAKTDEEAEELALSQDLWLLRVGKGLDSRVPSIEEAKAHPYTASDKKLIEENRKRMVIGSPTTVKQQLLDLTGCYETNEIMVLCNVFDFEAKKESYERLAELFL.

The protein to bacterial alkanal monooxygenase alpha and beta chains.

This is an uncharacterized protein from Bacillus subtilis (strain 168).